A 65-amino-acid polypeptide reads, in one-letter code: MKISEIREMSAQEITGKLTELKKEFFNLRFQHGVGQLENTAILPSIRKDIARLMTVCREMNLNIS.

Belongs to the universal ribosomal protein uL29 family.

This is Large ribosomal subunit protein uL29 from Desulforapulum autotrophicum (strain ATCC 43914 / DSM 3382 / VKM B-1955 / HRM2) (Desulfobacterium autotrophicum).